Here is a 347-residue protein sequence, read N- to C-terminus: Beta carbonic anhydrase 1, chloroplastic (347 aa).

The transit peptide at 1–113 (MSTAPLSGFF…AAAKVEQITA (113 aa)) directs the protein to the chloroplast. Ala114 bears the N-acetylalanine mark. The residue at position 175 (Ser175) is a Phosphoserine. Tyr203 is modified (phosphotyrosine). Ser266 bears the Phosphoserine mark. Cys280 carries the post-translational modification S-nitrosocysteine.

The protein belongs to the beta-class carbonic anhydrase family. As to quaternary structure, homohexamer. In terms of processing, S-nitrosylation at Cys-280 is up-regulated during nitrosative burst and suppresses both binding of salicylic acid and carbonic anhydrase activity. S-nitrosylated in response to an avirulent but not to a virulent bacterial strain. As to expression, strongly expressed in aerial tissues including leaves, stems, flowers and siliques. Accumulates in both guard cells and mesophyll cells.

The protein resides in the plastid. It is found in the chloroplast stroma. It localises to the cell membrane. It catalyses the reaction hydrogencarbonate + H(+) = CO2 + H2O. Functionally, reversible hydration of carbon dioxide. Required for photosynthesis in cotyledons. Binds salicylic acid. Together with BCA4, involved in the CO(2) signaling pathway which controls gas-exchange between plants and the atmosphere by modulating stomatal development and movements. Promotes water use efficiency. The polypeptide is Beta carbonic anhydrase 1, chloroplastic (Arabidopsis thaliana (Mouse-ear cress)).